Reading from the N-terminus, the 385-residue chain is Meiotic recombination protein SPO11-2 (385 aa).

The Topo IIA-type catalytic domain maps to 24–169; the sequence is LPPAEVRARI…LGIMASSRGA (146 aa). The active-site O-(5'-phospho-DNA)-tyrosine intermediate is Tyr-126. Residues Glu-219 and Asp-272 each contribute to the Mg(2+) site.

The protein belongs to the TOP6A family. As to quaternary structure, interacts with TOP6B. It depends on Mg(2+) as a cofactor. In terms of tissue distribution, highly expressed in flowers before pollination. Expressed in roots and shoots.

The protein localises to the nucleus. The enzyme catalyses ATP-dependent breakage, passage and rejoining of double-stranded DNA.. Required for meiotic recombination. Mediates DNA cleavage that forms the double-strand breaks (DSB) that initiate meiotic recombination. In Oryza sativa subsp. indica (Rice), this protein is Meiotic recombination protein SPO11-2 (SPO11-2).